The following is a 112-amino-acid chain: T cell receptor alpha variable 17 (112 aa).

An N-terminal signal peptide occupies residues 1-21; that stretch reads METLLGVSLVILWLQLARVNS. Residues 22–112 enclose the Ig-like domain; the sequence is QQGEEDPQAL…DTASYFCATD (91 aa). N-linked (GlcNAc...) asparagine glycosylation is found at Asn-38 and Asn-42. Cysteines 43 and 109 form a disulfide.

In terms of assembly, alpha-beta TR is a heterodimer composed of an alpha and beta chain; disulfide-linked. The alpha-beta TR is associated with the transmembrane signaling CD3 coreceptor proteins to form the TR-CD3 (TcR or TCR). The assembly of alpha-beta TR heterodimers with CD3 occurs in the endoplasmic reticulum where a single alpha-beta TR heterodimer associates with one CD3D-CD3E heterodimer, one CD3G-CD3E heterodimer and one CD247 homodimer forming a stable octameric structure. CD3D-CD3E and CD3G-CD3E heterodimers preferentially associate with TR alpha and TR beta chains, respectively. The association of the CD247 homodimer is the last step of TcR assembly in the endoplasmic reticulum and is required for transport to the cell surface.

The protein localises to the cell membrane. Its function is as follows. V region of the variable domain of T cell receptor (TR) alpha chain that participates in the antigen recognition. Alpha-beta T cell receptors are antigen specific receptors which are essential to the immune response and are present on the cell surface of T lymphocytes. Recognize peptide-major histocompatibility (MH) (pMH) complexes that are displayed by antigen presenting cells (APC), a prerequisite for efficient T cell adaptive immunity against pathogens. Binding of alpha-beta TR to pMH complex initiates TR-CD3 clustering on the cell surface and intracellular activation of LCK that phosphorylates the ITAM motifs of CD3G, CD3D, CD3E and CD247 enabling the recruitment of ZAP70. In turn ZAP70 phosphorylates LAT, which recruits numerous signaling molecules to form the LAT signalosome. The LAT signalosome propagates signal branching to three major signaling pathways, the calcium, the mitogen-activated protein kinase (MAPK) kinase and the nuclear factor NF-kappa-B (NF-kB) pathways, leading to the mobilization of transcription factors that are critical for gene expression and essential for T cell growth and differentiation. The T cell repertoire is generated in the thymus, by V-(D)-J rearrangement. This repertoire is then shaped by intrathymic selection events to generate a peripheral T cell pool of self-MH restricted, non-autoaggressive T cells. Post-thymic interaction of alpha-beta TR with the pMH complexes shapes TR structural and functional avidity. In Homo sapiens (Human), this protein is T cell receptor alpha variable 17.